The chain runs to 301 residues: tRNA-cytidine(32) 2-sulfurtransferase (301 aa).

The PP-loop motif signature appears at 55 to 60 (SGGKDS). [4Fe-4S] cluster-binding residues include Cys-130, Cys-133, and Cys-221.

This sequence belongs to the TtcA family. In terms of assembly, homodimer. Mg(2+) is required as a cofactor. Requires [4Fe-4S] cluster as cofactor.

Its subcellular location is the cytoplasm. It catalyses the reaction cytidine(32) in tRNA + S-sulfanyl-L-cysteinyl-[cysteine desulfurase] + AH2 + ATP = 2-thiocytidine(32) in tRNA + L-cysteinyl-[cysteine desulfurase] + A + AMP + diphosphate + H(+). Its pathway is tRNA modification. In terms of biological role, catalyzes the ATP-dependent 2-thiolation of cytidine in position 32 of tRNA, to form 2-thiocytidine (s(2)C32). The sulfur atoms are provided by the cysteine/cysteine desulfurase (IscS) system. The chain is tRNA-cytidine(32) 2-sulfurtransferase from Acinetobacter baumannii (strain AB307-0294).